The following is a 399-amino-acid chain: Nicotinate phosphoribosyltransferase (399 aa).

His224 is modified (phosphohistidine; by autocatalysis).

This sequence belongs to the NAPRTase family. Post-translationally, transiently phosphorylated on a His residue during the reaction cycle. Phosphorylation strongly increases the affinity for substrates and increases the rate of nicotinate D-ribonucleotide production. Dephosphorylation regenerates the low-affinity form of the enzyme, leading to product release.

It carries out the reaction nicotinate + 5-phospho-alpha-D-ribose 1-diphosphate + ATP + H2O = nicotinate beta-D-ribonucleotide + ADP + phosphate + diphosphate. It participates in cofactor biosynthesis; NAD(+) biosynthesis; nicotinate D-ribonucleotide from nicotinate: step 1/1. In terms of biological role, catalyzes the synthesis of beta-nicotinate D-ribonucleotide from nicotinate and 5-phospho-D-ribose 1-phosphate at the expense of ATP. The polypeptide is Nicotinate phosphoribosyltransferase (Ectopseudomonas mendocina (strain ymp) (Pseudomonas mendocina)).